We begin with the raw amino-acid sequence, 372 residues long: Nickel transporter NicT (372 aa).

Transmembrane regions (helical) follow at residues 30–50 (LMFA…TLLV), 55–75 (LSLG…TLGL), 104–124 (VGFF…VMLV), 152–172 (ISGA…VGIV), 218–238 (VGFL…LVLA), 245–265 (GLPW…MCLL), 294–314 (VTGL…LGLI), and 335–355 (TVGF…LLVW).

It belongs to the NiCoT transporter (TC 2.A.52) family.

The protein resides in the cell membrane. It carries out the reaction Ni(2+)(in) = Ni(2+)(out). Export of the fluoroquinolone antibiotic norfloxacin is inhibited by the proton ionophore carbonyl cyanide m-chlorophenylhydrazone (CCCP). Nickel may influence the extrusion of antibiotics possibly by facilitating the proton motive force-dependent efflux process. Its function is as follows. Involved in nickel uptake. In addition, acts as a drug efflux pump and contributes to moderate tolerance towards different classes of antibiotics, including fluoroquinolones, aminoglycosides and the anti-TB drug isoniazid, with a preference for fluoroquinolones. The drug efflux function is probably dependent on proton motive force (pmf) or ion gradient, and might be facilitated by the presence of Ni(2+) ions. The chain is Nickel transporter NicT from Mycobacterium tuberculosis (strain ATCC 25618 / H37Rv).